The following is a 120-amino-acid chain: Large ribosomal subunit protein uL24 (120 aa).

It belongs to the universal ribosomal protein uL24 family. In terms of assembly, part of the 50S ribosomal subunit.

One of two assembly initiator proteins, it binds directly to the 5'-end of the 23S rRNA, where it nucleates assembly of the 50S subunit. Its function is as follows. Located at the polypeptide exit tunnel on the outside of the subunit. The chain is Large ribosomal subunit protein uL24 from Methanocaldococcus jannaschii (strain ATCC 43067 / DSM 2661 / JAL-1 / JCM 10045 / NBRC 100440) (Methanococcus jannaschii).